A 157-amino-acid polypeptide reads, in one-letter code: Small ribosomal subunit protein uS7 (157 aa).

Belongs to the universal ribosomal protein uS7 family. In terms of assembly, part of the 30S ribosomal subunit. Contacts proteins S9 and S11.

Functionally, one of the primary rRNA binding proteins, it binds directly to 16S rRNA where it nucleates assembly of the head domain of the 30S subunit. Is located at the subunit interface close to the decoding center, probably blocks exit of the E-site tRNA. The protein is Small ribosomal subunit protein uS7 of Borrelia hermsii (strain HS1 / DAH).